Here is a 68-residue protein sequence, read N- to C-terminus: DNA-directed RNA polymerase subunit Rpo10 (68 aa).

Residues C7, C10, C44, and C45 each contribute to the Zn(2+) site.

This sequence belongs to the archaeal Rpo10/eukaryotic RPB10 RNA polymerase subunit family. In terms of assembly, part of the RNA polymerase complex. Requires Zn(2+) as cofactor.

Its subcellular location is the cytoplasm. The enzyme catalyses RNA(n) + a ribonucleoside 5'-triphosphate = RNA(n+1) + diphosphate. In terms of biological role, DNA-dependent RNA polymerase (RNAP) catalyzes the transcription of DNA into RNA using the four ribonucleoside triphosphates as substrates. This Methanococcus maripaludis (strain DSM 14266 / JCM 13030 / NBRC 101832 / S2 / LL) protein is DNA-directed RNA polymerase subunit Rpo10.